Reading from the N-terminus, the 581-residue chain is Arginine--tRNA ligase (581 aa).

Residues proline 126 to histidine 136 carry the 'HIGH' region motif.

The protein belongs to the class-I aminoacyl-tRNA synthetase family. Monomer.

The protein localises to the cytoplasm. It catalyses the reaction tRNA(Arg) + L-arginine + ATP = L-arginyl-tRNA(Arg) + AMP + diphosphate. This Shewanella baltica (strain OS223) protein is Arginine--tRNA ligase.